The following is a 782-amino-acid chain: Pyridoxal-dependent decarboxylase domain-containing protein 1 (782 aa).

Positions 26 to 48 (ILEDNQRPSEEEKDGKKYTRKDI) are enriched in basic and acidic residues. Disordered stretches follow at residues 26 to 56 (ILEDNQRPSEEEKDGKKYTRKDIPGPLQGSG), 673 to 695 (QTTGLTPPPTPTSAHGKRQAGQK), 702 to 721 (RNSDAMSETSSISHLEEVES), and 726 to 782 (PMPE…DSLR). 2 stretches are compositionally biased toward polar residues: residues 703–714 (NSDAMSETSSIS) and 747–782 (AEQSSTPSIVPTETSSEGSQEPSIPSANTAESDSLR).

It belongs to the group II decarboxylase family. Pyridoxal 5'-phosphate is required as a cofactor.

This Xenopus laevis (African clawed frog) protein is Pyridoxal-dependent decarboxylase domain-containing protein 1 (pdxdc1).